The sequence spans 43 residues: Iota-conotoxin-like Fi11.6 (43 aa).

Intrachain disulfides connect Cys2/Cys16, Cys9/Cys19, Cys15/Cys24, and Cys18/Cys35. At Pro8 the chain carries 4-hydroxyproline. Pro26 is subject to 4-hydroxyproline. Trp30 carries the post-translational modification 6'-bromotryptophan. D-phenylalanine is present on Phe41.

This sequence belongs to the conotoxin I1 superfamily. Expressed by the venom duct.

The protein resides in the secreted. Its function is as follows. Iota-conotoxins bind to voltage-gated sodium channels (Nav) and act as agonists by shifting the voltage-dependence of activation to more hyperpolarized levels. Produces general excitatory symptoms. The sequence is that of Iota-conotoxin-like Fi11.6 from Conus figulinus (Fig cone).